A 139-amino-acid chain; its full sequence is NADH-quinone oxidoreductase subunit A (139 aa).

3 helical membrane passes run 11-31, 70-90, and 97-117; these read LWPL…MLAL, LIAI…AWAI, and WPGY…LVYL.

It belongs to the complex I subunit 3 family. In terms of assembly, NDH-1 is composed of 14 different subunits. Subunits NuoA, H, J, K, L, M, N constitute the membrane sector of the complex.

The protein resides in the cell inner membrane. The enzyme catalyses a quinone + NADH + 5 H(+)(in) = a quinol + NAD(+) + 4 H(+)(out). Its function is as follows. NDH-1 shuttles electrons from NADH, via FMN and iron-sulfur (Fe-S) centers, to quinones in the respiratory chain. The immediate electron acceptor for the enzyme in this species is believed to be ubiquinone. Couples the redox reaction to proton translocation (for every two electrons transferred, four hydrogen ions are translocated across the cytoplasmic membrane), and thus conserves the redox energy in a proton gradient. This Methylococcus capsulatus (strain ATCC 33009 / NCIMB 11132 / Bath) protein is NADH-quinone oxidoreductase subunit A.